A 444-amino-acid chain; its full sequence is Phosphoribosylamine--glycine ligase (444 aa).

An ATP-grasp domain is found at 109-324 (RNLFKKYEID…FLDVCFAIAE (216 aa)). Residue 140–202 (MTSLGKDVVV…EEKLVGVEFT (63 aa)) coordinates ATP. Mg(2+) is bound by residues glutamine 282, glutamate 294, and asparagine 296. The Mn(2+) site is built by glutamine 282, glutamate 294, and asparagine 296.

Belongs to the GARS family. It depends on Mg(2+) as a cofactor. The cofactor is Mn(2+).

It catalyses the reaction 5-phospho-beta-D-ribosylamine + glycine + ATP = N(1)-(5-phospho-beta-D-ribosyl)glycinamide + ADP + phosphate + H(+). The protein operates within purine metabolism; IMP biosynthesis via de novo pathway; N(1)-(5-phospho-D-ribosyl)glycinamide from 5-phospho-alpha-D-ribose 1-diphosphate: step 2/2. This chain is Phosphoribosylamine--glycine ligase, found in Methanococcus maripaludis (strain DSM 14266 / JCM 13030 / NBRC 101832 / S2 / LL).